The sequence spans 152 residues: Gene 57 protein (152 aa).

In terms of domain architecture, Toprim spans 57–137 (RDMAITEGEI…IPMPEGEDVN (81 aa)).

The sequence is that of Gene 57 protein (57) from Mycobacterium (Mycobacteriophage D29).